A 314-amino-acid chain; its full sequence is Cytochrome b558/566 subunit B (314 aa).

8 helical membrane passes run 47–67 (LLLV…LIVS), 76–96 (SLIP…IPNY), 102–122 (LYSL…EGLI), 127–147 (LSIL…ASIL), 155–175 (LFIS…AYVI), 186–206 (YIAI…ENII), 233–253 (HITL…TSLI), and 264–284 (FLII…IYML).

It localises to the cell membrane. The sequence is that of Cytochrome b558/566 subunit B (cbsB) from Saccharolobus solfataricus (strain ATCC 35092 / DSM 1617 / JCM 11322 / P2) (Sulfolobus solfataricus).